Here is a 386-residue protein sequence, read N- to C-terminus: Succinyl-diaminopimelate desuccinylase (386 aa).

Residue His-72 coordinates Zn(2+). Asp-74 is an active-site residue. A Zn(2+)-binding site is contributed by Asp-105. Glu-139 acts as the Proton acceptor in catalysis. Glu-140, Glu-168, and His-353 together coordinate Zn(2+).

It belongs to the peptidase M20A family. DapE subfamily. Homodimer. It depends on Zn(2+) as a cofactor. Requires Co(2+) as cofactor.

The enzyme catalyses N-succinyl-(2S,6S)-2,6-diaminopimelate + H2O = (2S,6S)-2,6-diaminopimelate + succinate. The protein operates within amino-acid biosynthesis; L-lysine biosynthesis via DAP pathway; LL-2,6-diaminopimelate from (S)-tetrahydrodipicolinate (succinylase route): step 3/3. Catalyzes the hydrolysis of N-succinyl-L,L-diaminopimelic acid (SDAP), forming succinate and LL-2,6-diaminopimelate (DAP), an intermediate involved in the bacterial biosynthesis of lysine and meso-diaminopimelic acid, an essential component of bacterial cell walls. The polypeptide is Succinyl-diaminopimelate desuccinylase (Rhodospirillum centenum (strain ATCC 51521 / SW)).